An 828-amino-acid chain; its full sequence is Periplasmic nitrate reductase (828 aa).

A signal peptide (tat-type signal) is located at residues M1–A31. The 4Fe-4S Mo/W bis-MGD-type domain occupies I39–D95. The [4Fe-4S] cluster site is built by C46, C49, C53, and C81. Mo-bis(molybdopterin guanine dinucleotide) is bound by residues K83, Q150, N175, C179, W212–M219, S243–H247, Q262–D264, M372, Q376, N482, S508–D509, K531, D558, and T718–T727. Substrate is bound at residue F794. Residues N802 and K819 each contribute to the Mo-bis(molybdopterin guanine dinucleotide) site.

This sequence belongs to the prokaryotic molybdopterin-containing oxidoreductase family. NasA/NapA/NarB subfamily. In terms of assembly, component of the periplasmic nitrate reductase NapAB complex composed of NapA and NapB. Requires [4Fe-4S] cluster as cofactor. Mo-bis(molybdopterin guanine dinucleotide) serves as cofactor. In terms of processing, predicted to be exported by the Tat system. The position of the signal peptide cleavage has not been experimentally proven.

Its subcellular location is the periplasm. The enzyme catalyses 2 Fe(II)-[cytochrome] + nitrate + 2 H(+) = 2 Fe(III)-[cytochrome] + nitrite + H2O. Catalytic subunit of the periplasmic nitrate reductase complex NapAB. Receives electrons from NapB and catalyzes the reduction of nitrate to nitrite. This is Periplasmic nitrate reductase from Shigella dysenteriae serotype 1 (strain Sd197).